Here is a 459-residue protein sequence, read N- to C-terminus: UDP-N-acetylmuramoylalanine--D-glutamate ligase (459 aa).

Gly-119 to Thr-125 serves as a coordination point for ATP.

This sequence belongs to the MurCDEF family.

The protein resides in the cytoplasm. It catalyses the reaction UDP-N-acetyl-alpha-D-muramoyl-L-alanine + D-glutamate + ATP = UDP-N-acetyl-alpha-D-muramoyl-L-alanyl-D-glutamate + ADP + phosphate + H(+). The protein operates within cell wall biogenesis; peptidoglycan biosynthesis. Cell wall formation. Catalyzes the addition of glutamate to the nucleotide precursor UDP-N-acetylmuramoyl-L-alanine (UMA). In Lactiplantibacillus plantarum (strain ATCC BAA-793 / NCIMB 8826 / WCFS1) (Lactobacillus plantarum), this protein is UDP-N-acetylmuramoylalanine--D-glutamate ligase.